A 492-amino-acid chain; its full sequence is Tyrosinase-like protein 1 (492 aa).

An N-terminal signal peptide occupies residues M1–C22. The Cu cation site is built by H147, H155, H164, H289, H293, and H316. The segment at S472 to I492 is disordered. The span at S482 to I492 shows a compositional bias: polar residues.

Requires Cu(2+) as cofactor. As to expression, prismatic layer of shell (at protein level). Expressed primarily in the mantle with highest level in the mantle edge and lower level in the mantle pallium.

It localises to the secreted. In Margaritifera margaritifera (Freshwater pearl mussel), this protein is Tyrosinase-like protein 1.